We begin with the raw amino-acid sequence, 289 residues long: D-alanine aminotransferase (289 aa).

Residue tyrosine 31 participates in substrate binding. Arginine 50 lines the pyridoxal 5'-phosphate pocket. Residues arginine 99 and histidine 101 each contribute to the substrate site. Residue lysine 147 is the Proton acceptor of the active site. Lysine 147 carries the N6-(pyridoxal phosphate)lysine modification. Pyridoxal 5'-phosphate is bound at residue glutamate 179.

This sequence belongs to the class-IV pyridoxal-phosphate-dependent aminotransferase family. As to quaternary structure, homodimer. Requires pyridoxal 5'-phosphate as cofactor.

The enzyme catalyses D-alanine + 2-oxoglutarate = D-glutamate + pyruvate. Its function is as follows. Acts on the D-isomers of alanine, leucine, aspartate, glutamate, aminobutyrate, norvaline and asparagine. The enzyme transfers an amino group from a substrate D-amino acid to the pyridoxal phosphate cofactor to form pyridoxamine and an alpha-keto acid in the first half-reaction. The second half-reaction is the reverse of the first, transferring the amino group from the pyridoxamine to a second alpha-keto acid to form the product D-amino acid via a ping-pong mechanism. This is an important process in the formation of D-alanine and D-glutamate, which are essential bacterial cell wall components. The sequence is that of D-alanine aminotransferase (dat) from Listeria innocua serovar 6a (strain ATCC BAA-680 / CLIP 11262).